The following is a 408-amino-acid chain: CinA-like protein (408 aa).

Belongs to the CinA family.

The polypeptide is CinA-like protein (Anaeromyxobacter sp. (strain K)).